Reading from the N-terminus, the 1227-residue chain is ATP-dependent helicase/nuclease subunit A (1227 aa).

One can recognise a UvrD-like helicase ATP-binding domain in the interval 37-503; that stretch reads QKRTAEQIEA…ILLKENFRSQ (467 aa). 58–65 contacts ATP; sequence ASAGSGKT. One can recognise a UvrD-like helicase C-terminal domain in the interval 532 to 816; sequence SLVAGSPGQK…QLMTIHKSKG (285 aa).

The protein belongs to the helicase family. AddA subfamily. As to quaternary structure, heterodimer of AddA and AddB/RexB. The cofactor is Mg(2+).

The enzyme catalyses Couples ATP hydrolysis with the unwinding of duplex DNA by translocating in the 3'-5' direction.. It carries out the reaction ATP + H2O = ADP + phosphate + H(+). Its function is as follows. The heterodimer acts as both an ATP-dependent DNA helicase and an ATP-dependent, dual-direction single-stranded exonuclease. Recognizes the chi site generating a DNA molecule suitable for the initiation of homologous recombination. The AddA nuclease domain is required for chi fragment generation; this subunit has the helicase and 3' -&gt; 5' nuclease activities. The protein is ATP-dependent helicase/nuclease subunit A of Streptococcus suis (strain 98HAH33).